Reading from the N-terminus, the 196-residue chain is Dimiconin (196 aa).

Residues 1–21 form the signal peptide; the sequence is MKTIIVVTIFGILTCAYPTDG. Residues N62 and N187 are each glycosylated (N-linked (GlcNAc...) asparagine).

Belongs to the calycin superfamily. Triabin family. As to expression, salivary gland.

Its subcellular location is the secreted. Functionally, inhibits the intrinsic blood coagulation pathway by blocking the activation of host coagulation factor XII (F12) but not the enzymatic activity of activated F12. In Triatoma dimidiata (Kissing bug), this protein is Dimiconin.